A 461-amino-acid chain; its full sequence is Acetylcholine receptor subunit alpha (461 aa).

An N-terminal signal peptide occupies residues 1 to 24; that stretch reads MILCSYWHVGLVLLLFSCCGLVLG. At 25–234 the chain is on the extracellular side; that stretch reads SEHETRLVAN…ITYHFIMQRI (210 aa). 2 disulfides stabilise this stretch: Cys152/Cys166 and Cys216/Cys217. N-linked (GlcNAc...) asparagine glycosylation occurs at Asn165. 3 helical membrane-spanning segments follow: residues 235-259, 267-285, and 301-320; these read PLYF…VFYL, MTLS…LVIV, and YMLF…VVVI. Over 321–432 the chain is Cytoplasmic; the sequence is NTHHRSPSTH…WKYVAMVIDH (112 aa). A helical membrane pass occupies residues 433-451; the sequence is ILLCVFMLICIIGTVSVFA.

Belongs to the ligand-gated ion channel (TC 1.A.9) family. Acetylcholine receptor (TC 1.A.9.1) subfamily. Alpha-1/CHRNA1 sub-subfamily. In terms of assembly, pentamer of two alpha chains, and one each of the beta, delta, and gamma chains.

The protein resides in the postsynaptic cell membrane. It localises to the cell membrane. It carries out the reaction K(+)(in) = K(+)(out). It catalyses the reaction Na(+)(in) = Na(+)(out). Its function is as follows. Upon acetylcholine binding, the AChR responds by an extensive change in conformation that affects all subunits and leads to opening of an ion-conducting channel across the plasma membrane. This chain is Acetylcholine receptor subunit alpha (CHRNA1), found in Tetronarce californica (Pacific electric ray).